A 252-amino-acid polypeptide reads, in one-letter code: MNTQATPSPQFYLTAPATCPYLPNQMERKVFTHLVGPRAPEMNDLLTQGGFRRSQNIAYRPACETCRACVSVRILTEQFQPTKSMRRVLAANSDVVATVHAAEPSTEQFALFRRYLDHRHQSGGMSDMSALDYAIMVEDTHVNTRIIEYRVREPGSGIDSSKRGELLAVALSDVMSDGLSMVYSFFNPELEKRSLGTFMIIDHITRTRALGLPHVYLGYWVDGSEKMGYKTRYHPQEHLTPRGWEIYSPKEE.

Belongs to the R-transferase family. Bpt subfamily.

It localises to the cytoplasm. It carries out the reaction N-terminal L-glutamyl-[protein] + L-leucyl-tRNA(Leu) = N-terminal L-leucyl-L-glutamyl-[protein] + tRNA(Leu) + H(+). It catalyses the reaction N-terminal L-aspartyl-[protein] + L-leucyl-tRNA(Leu) = N-terminal L-leucyl-L-aspartyl-[protein] + tRNA(Leu) + H(+). Functionally, functions in the N-end rule pathway of protein degradation where it conjugates Leu from its aminoacyl-tRNA to the N-termini of proteins containing an N-terminal aspartate or glutamate. This is Aspartate/glutamate leucyltransferase from Agrobacterium fabrum (strain C58 / ATCC 33970) (Agrobacterium tumefaciens (strain C58)).